A 162-amino-acid chain; its full sequence is Protein-export protein SecB (162 aa).

It belongs to the SecB family. In terms of assembly, homotetramer, a dimer of dimers. One homotetramer interacts with 1 SecA dimer.

It is found in the cytoplasm. One of the proteins required for the normal export of preproteins out of the cell cytoplasm. It is a molecular chaperone that binds to a subset of precursor proteins, maintaining them in a translocation-competent state. It also specifically binds to its receptor SecA. The sequence is that of Protein-export protein SecB from Pseudomonas syringae pv. syringae (strain B728a).